Reading from the N-terminus, the 363-residue chain is UDP-N-acetylglucosamine--N-acetylmuramyl-(pentapeptide) pyrophosphoryl-undecaprenol N-acetylglucosamine transferase (363 aa).

UDP-N-acetyl-alpha-D-glucosamine-binding positions include 10–12, Asn124, Ser195, Ile250, and Gln295; that span reads TGG.

The protein belongs to the glycosyltransferase 28 family. MurG subfamily.

The protein localises to the cell membrane. It catalyses the reaction Mur2Ac(oyl-L-Ala-gamma-D-Glu-L-Lys-D-Ala-D-Ala)-di-trans,octa-cis-undecaprenyl diphosphate + UDP-N-acetyl-alpha-D-glucosamine = beta-D-GlcNAc-(1-&gt;4)-Mur2Ac(oyl-L-Ala-gamma-D-Glu-L-Lys-D-Ala-D-Ala)-di-trans,octa-cis-undecaprenyl diphosphate + UDP + H(+). It participates in cell wall biogenesis; peptidoglycan biosynthesis. Its function is as follows. Cell wall formation. Catalyzes the transfer of a GlcNAc subunit on undecaprenyl-pyrophosphoryl-MurNAc-pentapeptide (lipid intermediate I) to form undecaprenyl-pyrophosphoryl-MurNAc-(pentapeptide)GlcNAc (lipid intermediate II). The polypeptide is UDP-N-acetylglucosamine--N-acetylmuramyl-(pentapeptide) pyrophosphoryl-undecaprenol N-acetylglucosamine transferase (Lactiplantibacillus plantarum (strain ATCC BAA-793 / NCIMB 8826 / WCFS1) (Lactobacillus plantarum)).